The sequence spans 138 residues: Dual specificity phosphatase ibp1 (138 aa).

Residues 19 to 133 enclose the Rhodanese domain; sequence SPNEISIIDV…WKRRYGGQQG (115 aa). Catalysis depends on cysteine 70, which acts as the Phosphocysteine intermediate.

It belongs to the MPI phosphatase family.

The protein localises to the cytoplasm. It localises to the nucleus. The enzyme catalyses O-phospho-L-tyrosyl-[protein] + H2O = L-tyrosyl-[protein] + phosphate. In terms of biological role, may play a role in DNA replication checkpoint via regulation of hsk1 or may act downstream of hsk1 in an S phase regulatory pathway. The chain is Dual specificity phosphatase ibp1 (ibp1) from Schizosaccharomyces pombe (strain 972 / ATCC 24843) (Fission yeast).